Here is a 1334-residue protein sequence, read N- to C-terminus: MDYRHPNALGVNESSRAYEEIFGAPRKREPARTVSTPAFMEPAPVSKKPLPPPTRRLPRKPLPFRSTSLQPPSSQPPAPPTHQREASPVKNIEHSESFPSVFGTSNNHQIVPLTLKDGNDFGALYASLNTTPHFPQVSNHAPNNSNSPSLTWHTSSGDDSNQNPFFVRRQSQSSTSPVSDSVDENLLSAVSSVTESVETNLHLDQNYPYGSPVRSSKNPFLSSNSRLPTDDSSHTVGSHSFTSGTHPPIVSSNSAFTLPNAVTPAAQAPLIRSVSEYPANVSPPAQSLQLPKSTSNPADLHLSIASASSHKNIFSGLDVFSNVFHGPSTTLRDREHDMRNRSFDHSTLAHYEAVKQQRLGVEPTARSFTLSSYKSRASGNSLINDRSSTTTPTFVNSEASSPVHKNKRRRRIYAALLSRVASELLDRLQLGDITKDGLIYSNAFTGDHAVTVLMGIIHTSDRNLALLVGRSLDAQKFIHDVTYDHRLRDSHREIYQLQGTGYRPFLRANDNASINNKNHHKELEDNESGTRISPSTLGDTSFPNGIFTLLTHCYSPTCAKDHPCYSISCPRRLEQQHRLFAKMRANTEQSSSLAFDDKEQKLWIHSVPQEIAYSVSDRERKRQEVICEVIYTERDFVKDLEYLRDYWIKPLWASSCIPERKKEKFIRTVFLNALEVQAVNSKLAEALTKRQNYKPIVDNIADIFLEHVPKFEPFIRYGAGQLYGKYEFEKEKSSNPAFAKFVSDVERLKESRKLELNGYLTKPTTRLARYPLLLEAVLKYTDEGNPDKQDIPKVINIVRGFLSRLNVESGKAENKFNLFHLNQQLVFKPGEHYDLHLLDANRQLIFKGPLKKRSAGSTSSESASDVTLFLFDHALLIVKPKTINKRELLKVFQRPIPLLLLQLFLVDDNGLRIPYSSKQQLAAVSKAANGKPPSRFYPFSLQLLGRRGYEITLYATTEVSRDKWLEHIDNQQTLLQHRNQWFESVTICSNFFVGDNKVNAIGVYDSGRRLLYGTDTGVYVSLRKANSPLQFKPVRALNIPNISQLEVIEEYSLLLLLSDKVLYSYPLEMIDADTTQAPKKARKVSGHTTFFRVGICLGKVLVCAVKSSVLSATIKVFEPVTNYSKTRNMPSLKKFLTVNQDPLRIVKELYIPTESTSVHFLKNKLCVGCTRGFEVVSLDNLETQSLLDPADTSLEFVEKKENVKPIAIYRMNGGEFLLCYSQFAFYVNRDGWRSRPTWFVVWEGSPQNFALSYPYILAFEPTFIEIRHVETSELIHVISGRNIRLLADGRGKLGDGGEIFYACDQRGENCETSVVCSLRLTSAAAHAKEQHVDK.

Disordered regions lie at residues 1–89 (MDYR…ASPV), 135–182 (PQVS…SDSV), 203–245 (LDQN…TSGT), and 381–402 (SLIN…ASSP). Residues 138-149 (SNHAPNNSNSPS) show a composition bias toward low complexity. Over residues 150–164 (LTWHTSSGDDSNQNP) the composition is skewed to polar residues. A compositionally biased stretch (low complexity) spans 170-180 (QSQSSTSPVSD). 3 stretches are compositionally biased toward polar residues: residues 213–227 (VRSS…NSRL), 234–245 (HTVGSHSFTSGT), and 381–400 (SLIN…SEAS). Phosphoserine is present on Ser-381. The DH domain maps to 621-808 (KRQEVICEVI…RGFLSRLNVE (188 aa)). One can recognise a PH domain in the interval 843 to 973 (QLIFKGPLKK…WLEHIDNQQT (131 aa)). One can recognise a CNH domain in the interval 995–1293 (DNKVNAIGVY…RLLADGRGKL (299 aa)).

Its subcellular location is the cytoplasm. Stimulates the exchange of Rho1 and Rho5 GDP-bound form into GTP-bound form. Controls septum formation, cell wall synthesis and localization of F-actin patches. Coordinates actin deposition with cell wall biosynthesis during bipolar growth. The sequence is that of Rho1 guanine nucleotide exchange factor 1 (rgf1) from Schizosaccharomyces pombe (strain 972 / ATCC 24843) (Fission yeast).